The primary structure comprises 220 residues: MEGVLNFLTNINVIFTLLGYLIGGIPFGYALMKIFYGMDITKIGSGGIGATNVLRALQSKGVSNAKQMALLVLILDLFKGMFAVFLSKLFGLDYSLQWMVAIASILGHCYSPFLNFNGGKGVSTIMGSVVLLIPIESLIGLTVWFFVGKVLKISSLASILGVGTATVLIFFVPYMHIPDSVNILKEVGTQTPMVLIFIFTLIKHAGNIFNLLTGKEKKVL.

Helical transmembrane passes span 11–31, 70–90, 96–116, 127–147, 153–173, and 192–212; these read INVIFTLLGYLIGGIPFGYAL, LLVLILDLFKGMFAVFLSKLF, LQWMVAIASILGHCYSPFLNF, GSVVLLIPIESLIGLTVWFFV, ISSLASILGVGTATVLIFFVP, and PMVLIFIFTLIKHAGNIFNLL.

The protein belongs to the PlsY family. As to quaternary structure, probably interacts with PlsX.

Its subcellular location is the cell inner membrane. It carries out the reaction an acyl phosphate + sn-glycerol 3-phosphate = a 1-acyl-sn-glycero-3-phosphate + phosphate. It participates in lipid metabolism; phospholipid metabolism. Its function is as follows. Catalyzes the transfer of an acyl group from acyl-phosphate (acyl-PO(4)) to glycerol-3-phosphate (G3P) to form lysophosphatidic acid (LPA). This enzyme utilizes acyl-phosphate as fatty acyl donor, but not acyl-CoA or acyl-ACP. The chain is Glycerol-3-phosphate acyltransferase from Helicobacter pylori (strain J99 / ATCC 700824) (Campylobacter pylori J99).